Reading from the N-terminus, the 188-residue chain is Ion-translocating oxidoreductase complex subunit B (188 aa).

The interval 1–23 (MIEAAVSMSALGLGLGLLLGVAA) is hydrophobic. A 4Fe-4S domain is found at 29–88 (ESPPILDAIEGILPGTNCGACGYPGCRGLAEAMSEGAAPVTACAPGGRDVALALAAIVET). The [4Fe-4S] cluster site is built by Cys46, Cys49, Cys54, Cys71, Cys113, Cys116, Cys119, Cys123, Cys143, Cys146, Cys149, and Cys153. 4Fe-4S ferredoxin-type domains lie at 104–133 (TVAFIFEDHCTGCMRCFKRCPTDAIIGANR) and 134–163 (QIHTVVTDACIGCNACIEACPTEAIVARVK).

The protein belongs to the 4Fe4S bacterial-type ferredoxin family. RnfB subfamily. The complex is composed of six subunits: RnfA, RnfB, RnfC, RnfD, RnfE and RnfG. [4Fe-4S] cluster serves as cofactor.

Its subcellular location is the cellular chromatophore membrane. Part of a membrane-bound complex that couples electron transfer with translocation of ions across the membrane. The protein is Ion-translocating oxidoreductase complex subunit B of Cereibacter sphaeroides (strain ATCC 17029 / ATH 2.4.9) (Rhodobacter sphaeroides).